A 135-amino-acid chain; its full sequence is MYALGTHLLIELKNCNPEILKDLESVKNILVDAAKKANATIISVNFHEFNPFGISGVVVIAESHLTIHTWPEYGFAAVDVFTCGETIKPEIAAQYIIEAFECKVPSIVEMKRGIISHRNEKLPHKVCHEELQVVY.

The active-site Schiff-base intermediate with substrate; via pyruvic acid is the Ser-63. Residue Ser-63 is modified to Pyruvic acid (Ser); by autocatalysis. His-68 (proton acceptor; for processing activity) is an active-site residue. The active-site Proton donor; for catalytic activity is the Cys-83.

This sequence belongs to the prokaryotic AdoMetDC family. Type 1 subfamily. As to quaternary structure, heterotetramer of two alpha and two beta chains arranged as a dimer of alpha/beta heterodimers. Pyruvate serves as cofactor. Is synthesized initially as an inactive proenzyme. Formation of the active enzyme involves a self-maturation process in which the active site pyruvoyl group is generated from an internal serine residue via an autocatalytic post-translational modification. Two non-identical subunits are generated from the proenzyme in this reaction, and the pyruvate is formed at the N-terminus of the alpha chain, which is derived from the carboxyl end of the proenzyme. The post-translation cleavage follows an unusual pathway, termed non-hydrolytic serinolysis, in which the side chain hydroxyl group of the serine supplies its oxygen atom to form the C-terminus of the beta chain, while the remainder of the serine residue undergoes an oxidative deamination to produce ammonia and the pyruvoyl group blocking the N-terminus of the alpha chain.

The catalysed reaction is S-adenosyl-L-methionine + H(+) = S-adenosyl 3-(methylsulfanyl)propylamine + CO2. The protein operates within amine and polyamine biosynthesis; S-adenosylmethioninamine biosynthesis; S-adenosylmethioninamine from S-adenosyl-L-methionine: step 1/1. In terms of biological role, catalyzes the decarboxylation of S-adenosylmethionine to S-adenosylmethioninamine (dcAdoMet), the propylamine donor required for the synthesis of the polyamines spermine and spermidine from the diamine putrescine. The protein is S-adenosylmethionine decarboxylase proenzyme of Thermodesulfovibrio yellowstonii (strain ATCC 51303 / DSM 11347 / YP87).